Here is a 242-residue protein sequence, read N- to C-terminus: Small ribosomal subunit protein uS7m (242 aa).

A mitochondrion-targeting transit peptide spans 1 to 37; it reads MAAPTAKVSRGWSGLALGVRIAVLRLPGLTQVRWSRY. The residue at position 228 (Lys228) is an N6-acetyllysine.

This sequence belongs to the universal ribosomal protein uS7 family. Component of the mitochondrial ribosome small subunit (28S) which comprises a 12S rRNA and about 30 distinct proteins.

Its subcellular location is the mitochondrion. This is Small ribosomal subunit protein uS7m (MRPS7) from Bos taurus (Bovine).